The sequence spans 252 residues: PHD finger protein ALFIN-LIKE 7 (252 aa).

The interval 141-193 (AKQSKDQSANHNSSRSKSSGGKPRHSESHTKASKMSPPPRKEDESGDEDEDDE) is disordered. The span at 149-161 (ANHNSSRSKSSGG) shows a compositional bias: low complexity. A Phosphoserine modification is found at Ser176. Residues 184-193 (ESGDEDEDDE) are compositionally biased toward acidic residues. The segment at 195–247 (GAVCGACGDNYGGDEFWICCDACEKWFHGKCVKITPAKAEHIKHYKCPSCTTS) adopts a PHD-type zinc-finger fold.

The protein belongs to the Alfin family. As to quaternary structure, interacts with H3K4me3 and to a lesser extent with H3K4me2. In terms of tissue distribution, ubiquitously expressed.

It localises to the nucleus. Functionally, histone-binding component that specifically recognizes H3 tails trimethylated on 'Lys-4' (H3K4me3), which mark transcription start sites of virtually all active genes. This chain is PHD finger protein ALFIN-LIKE 7 (AL7), found in Arabidopsis thaliana (Mouse-ear cress).